The primary structure comprises 155 residues: Transcription antitermination protein NusB (155 aa).

The protein belongs to the NusB family.

Its function is as follows. Involved in transcription antitermination. Required for transcription of ribosomal RNA (rRNA) genes. Binds specifically to the boxA antiterminator sequence of the ribosomal RNA (rrn) operons. The polypeptide is Transcription antitermination protein NusB (Aliivibrio fischeri (strain ATCC 700601 / ES114) (Vibrio fischeri)).